The primary structure comprises 555 residues: Alpha-1,2-mannosyltransferase ALG9 (555 aa).

Over 1-7 the chain is Cytoplasmic; the sequence is MNCKAVT. Residues 8-28 form a helical membrane-spanning segment; the sequence is ISLLLLLFLTRVYIQPTFSLI. Topologically, residues 29 to 62 are lumenal; that stretch reads SDCDETFNYWEPLNLLVRGFGKQTWEYSPEYSIR. The helical transmembrane segment at 63–83 threads the bilayer; that stretch reads SWAFLLPFYCILYPVNKFTDL. At 84–86 the chain is on the cytoplasmic side; sequence ESH. The helical transmembrane segment at 87–107 threads the bilayer; that stretch reads WNFFITRACLGFFSFIMEFKL. Over 108–113 the chain is Lumenal; that stretch reads HREIAG. The chain crosses the membrane as a helical span at residues 114–134; the sequence is SLALQIANIWIIFQLFNPGWF. Over 135–176 the chain is Cytoplasmic; it reads HASVELLPSAVAMLLYVGATRHSLRYLSTGSTSNFTKSLAYN. The chain crosses the membrane as a helical span at residues 177–197; sequence FLASILGWPFVLILSLPLCLH. The Lumenal segment spans residues 198-213; the sequence is YLFNHRIISTIRTAFD. A helical transmembrane segment spans residues 214 to 234; sequence CCLIFSLTAFAVIVTDSIFYG. Residues 235–268 lie on the Cytoplasmic side of the membrane; that stretch reads KLAPVSWNILFYNVINASEESGPNIFGVEPWYYY. A helical membrane pass occupies residues 269–289; it reads PLNLLLNFPLPVLVLAILGIF. At 290 to 316 the chain is on the lumenal side; sequence HLRLWPLWASLFTWIAVFTQQPHKEER. A helical transmembrane segment spans residues 317–337; it reads FLYPIYGLITLSASIAFYKVL. The Cytoplasmic portion of the chain corresponds to 338–349; the sequence is NLFNRKPILKKG. A helical transmembrane segment spans residues 350-370; the sequence is IKLSVLLIVAGQAMSRIVALV. Residues 371–555 are Lumenal-facing; sequence NNYTAPIAVY…LFEKPTETTN (185 aa).

This sequence belongs to the glycosyltransferase 22 family.

The protein resides in the endoplasmic reticulum membrane. It carries out the reaction an alpha-D-Man-(1-&gt;2)-alpha-D-Man-(1-&gt;2)-alpha-D-Man-(1-&gt;3)-[alpha-D-Man-(1-&gt;3)-alpha-D-Man-(1-&gt;6)]-beta-D-Man-(1-&gt;4)-beta-D-GlcNAc-(1-&gt;4)-alpha-D-GlcNAc-diphospho-di-trans,poly-cis-dolichol + a di-trans,poly-cis-dolichyl beta-D-mannosyl phosphate = an alpha-D-Man-(1-&gt;2)-alpha-D-Man-(1-&gt;2)-alpha-D-Man-(1-&gt;3)-[alpha-D-Man-(1-&gt;2)-alpha-D-Man-(1-&gt;3)-alpha-D-Man-(1-&gt;6)]-beta-D-Man-(1-&gt;4)-beta-D-GlcNAc-(1-&gt;4)-alpha-D-GlcNAc-diphospho-di-trans,poly-cis-dolichol + a di-trans,poly-cis-dolichyl phosphate + H(+). It catalyses the reaction an alpha-D-Man-(1-&gt;2)-alpha-D-Man-(1-&gt;2)-alpha-D-Man-(1-&gt;3)-[alpha-D-Man-(1-&gt;2)-alpha-D-Man-(1-&gt;3)-[alpha-D-Man-(1-&gt;6)]-alpha-D-Man-(1-&gt;6)]-beta-D-Man-(1-&gt;4)-beta-D-GlcNAc-(1-&gt;4)-alpha-D-GlcNAc-diphospho-di-trans,poly-cis-dolichol + a di-trans,poly-cis-dolichyl beta-D-mannosyl phosphate = an alpha-D-Man-(1-&gt;2)-alpha-D-Man-(1-&gt;2)-alpha-D-Man-(1-&gt;3)-[alpha-D-Man-(1-&gt;2)-alpha-D-Man-(1-&gt;3)-[alpha-D-Man-(1-&gt;2)-alpha-D-Man-(1-&gt;6)]-alpha-D-Man-(1-&gt;6)]-beta-D-Man-(1-&gt;4)-beta-D-GlcNAc-(1-&gt;4)-alpha-D-GlcNAc-diphospho-di-trans,poly-cis-dolichol + a di-trans,poly-cis-dolichyl phosphate + H(+). It functions in the pathway protein modification; protein glycosylation. Mannosyltransferase that operates in the biosynthetic pathway of dolichol-linked oligosaccharides, the glycan precursors employed in protein asparagine (N)-glycosylation. The assembly of dolichol-linked oligosaccharides begins on the cytosolic side of the endoplasmic reticulum membrane and finishes in its lumen. The sequential addition of sugars to dolichol pyrophosphate produces dolichol-linked oligosaccharides containing fourteen sugars, including two GlcNAcs, nine mannoses and three glucoses. Once assembled, the oligosaccharide is transferred from the lipid to nascent proteins by oligosaccharyltransferases. In the lumen of the endoplasmic reticulum, catalyzes the addition of the seventh and ninth alpha-1,2-linked mannose residues to Man(6)GlcNAc(2)-PP-dolichol and Man(8)GlcNAc(2)-PP-dolichol respectively. This Saccharomyces cerevisiae (strain ATCC 204508 / S288c) (Baker's yeast) protein is Alpha-1,2-mannosyltransferase ALG9 (ALG9).